We begin with the raw amino-acid sequence, 511 residues long: 2'-5'-oligoadenylate synthase-like protein 1 (511 aa).

Ubiquitin-like domains lie at 350–429 (IQVT…ISPE) and 430–506 (IQVF…EGAA).

This sequence belongs to the 2-5A synthase family. Specifically interacts with the ligand binding domain of the thyroid receptor (TR). TRIP14 does not require the presence of thyroid hormone for its interaction. Binds MBD1.

It localises to the nucleus. The protein localises to the nucleolus. Its subcellular location is the cytoplasm. Does not have 2'-5'-OAS activity, but can bind double-stranded RNA. Displays antiviral activity via an alternative antiviral pathway independent of RNase L. The chain is 2'-5'-oligoadenylate synthase-like protein 1 (Oasl1) from Mus musculus (Mouse).